The chain runs to 106 residues: V-type proton ATPase subunit G2 (106 aa).

Met-1 is modified (N-acetylmethionine). Residues 31–67 (LKQAKEEAETEVAEHKTSTEQGFQRKLEATSGDSGAN) are disordered. A compositionally biased stretch (basic and acidic residues) spans 33 to 58 (QAKEEAETEVAEHKTSTEQGFQRKLE).

Belongs to the V-ATPase G subunit family. V-ATPase is a heteromultimeric enzyme composed of a peripheral catalytic V1 complex (components A to H) attached to an integral membrane V0 proton pore complex (components: a, c, c'', d and e).

Its subcellular location is the vacuole membrane. Functionally, catalytic subunit of the peripheral V1 complex of vacuolar ATPase (V-ATPase). V-ATPase is responsible for acidifying a variety of intracellular compartments in eukaryotic cells. The chain is V-type proton ATPase subunit G2 (VHA-G2) from Arabidopsis thaliana (Mouse-ear cress).